The following is a 171-amino-acid chain: Co-chaperone protein HscB (171 aa).

The 73-residue stretch at 2–74 (DYFTLFGLPA…LMRAEYLLSL (73 aa)) folds into the J domain.

It belongs to the HscB family. As to quaternary structure, interacts with HscA and stimulates its ATPase activity. Interacts with IscU.

Functionally, co-chaperone involved in the maturation of iron-sulfur cluster-containing proteins. Seems to help targeting proteins to be folded toward HscA. The protein is Co-chaperone protein HscB of Shigella boydii serotype 18 (strain CDC 3083-94 / BS512).